The primary structure comprises 129 residues: Small ribosomal subunit protein uS9 (129 aa).

This sequence belongs to the universal ribosomal protein uS9 family.

This is Small ribosomal subunit protein uS9 from Helicobacter hepaticus (strain ATCC 51449 / 3B1).